The primary structure comprises 35 residues: Photosystem II reaction center protein T (35 aa).

A helical membrane pass occupies residues 3–23; it reads ALVYTFLLVSTLGIIFFAIFF.

It belongs to the PsbT family. As to quaternary structure, PSII is composed of 1 copy each of membrane proteins PsbA, PsbB, PsbC, PsbD, PsbE, PsbF, PsbH, PsbI, PsbJ, PsbK, PsbL, PsbM, PsbT, PsbY, PsbZ, Psb30/Ycf12, at least 3 peripheral proteins of the oxygen-evolving complex and a large number of cofactors. It forms dimeric complexes.

The protein localises to the plastid. The protein resides in the chloroplast thylakoid membrane. Found at the monomer-monomer interface of the photosystem II (PS II) dimer, plays a role in assembly and dimerization of PSII. PSII is a light-driven water plastoquinone oxidoreductase, using light energy to abstract electrons from H(2)O, generating a proton gradient subsequently used for ATP formation. The sequence is that of Photosystem II reaction center protein T from Ceratophyllum demersum (Rigid hornwort).